Here is a 227-residue protein sequence, read N- to C-terminus: MSLEQLVTINDLNVDIGKQLIKIARDSIKNRFKLVNLNLDEYKNPVLNKRGLAFVTIEKIEDERTSLRGCIGYVEAVAPLKEIVSKAAVAAAFSDPRFPPLSKSELNDILIEVTILTKPEEISVKDRWKLPSFINVGEDGLIVEYGIMYSGLLLPQVASEYCWDSETFLAETCIKAGLKPDCWLNERVKIKKFNGLIYREINKNTDEIIVLRPSDIKCKKSQHSNLQ.

The AMMECR1 domain occupies 15–209 (DIGKQLIKIA…EINKNTDEII (195 aa)).

This chain is Protein Saci_0792, found in Sulfolobus acidocaldarius (strain ATCC 33909 / DSM 639 / JCM 8929 / NBRC 15157 / NCIMB 11770).